The following is a 465-amino-acid chain: Cerebellar degeneration-related protein 2-like (465 aa).

2 coiled-coil regions span residues 38-143 (LLER…EQLR) and 188-265 (LEQE…TYLL). Residues 282–314 (APEADDPQPGRGDDLGAQDGVSSPAASPGHVVR) are disordered. S308, S318, and S344 each carry phosphoserine. A coiled-coil region spans residues 350 to 377 (MSILREVDEQYHALLEKYEELLSKCRQH). The interval 382–417 (RHAGVQTSRPISRDSSWRDLRGGEEGQGEVKAGEKS) is disordered. The segment covering 392–405 (ISRDSSWRDLRGGE) has biased composition (basic and acidic residues).

The protein belongs to the CDR2 family.

The sequence is that of Cerebellar degeneration-related protein 2-like (CDR2L) from Homo sapiens (Human).